We begin with the raw amino-acid sequence, 274 residues long: Pyrroline-5-carboxylate reductase 3 (274 aa).

Belongs to the pyrroline-5-carboxylate reductase family. In terms of assembly, homodecamer; composed of 5 homodimers.

It localises to the cytoplasm. The catalysed reaction is L-proline + NADP(+) = (S)-1-pyrroline-5-carboxylate + NADPH + 2 H(+). It carries out the reaction L-proline + NAD(+) = (S)-1-pyrroline-5-carboxylate + NADH + 2 H(+). Its pathway is amino-acid biosynthesis; L-proline biosynthesis; L-proline from L-glutamate 5-semialdehyde: step 1/1. Functionally, oxidoreductase that catalyzes the last step in proline biosynthesis, which corresponds to the reduction of pyrroline-5-carboxylate (P5C) to L-proline using NAD(P)H. Proline is synthesized from either glutamate or ornithine; both are converted to P5C, and then to proline via pyrroline-5-carboxylate reductases (PYCRs). PYCR3 is exclusively linked to the biosynthesis of proline from ornithine. This is Pyrroline-5-carboxylate reductase 3 from Xenopus laevis (African clawed frog).